We begin with the raw amino-acid sequence, 302 residues long: Sulfate adenylyltransferase subunit 2 (302 aa).

It belongs to the PAPS reductase family. CysD subfamily. As to quaternary structure, heterodimer composed of CysD, the smaller subunit, and CysN.

The enzyme catalyses sulfate + ATP + H(+) = adenosine 5'-phosphosulfate + diphosphate. It participates in sulfur metabolism; hydrogen sulfide biosynthesis; sulfite from sulfate: step 1/3. Its function is as follows. With CysN forms the ATP sulfurylase (ATPS) that catalyzes the adenylation of sulfate producing adenosine 5'-phosphosulfate (APS) and diphosphate, the first enzymatic step in sulfur assimilation pathway. APS synthesis involves the formation of a high-energy phosphoric-sulfuric acid anhydride bond driven by GTP hydrolysis by CysN coupled to ATP hydrolysis by CysD. The chain is Sulfate adenylyltransferase subunit 2 from Citrobacter koseri (strain ATCC BAA-895 / CDC 4225-83 / SGSC4696).